The following is a 263-amino-acid chain: Hemin import ATP-binding protein HmuV (263 aa).

The region spanning 2–242 (IEARDVSVDI…DLIEKVFDCR (241 aa)) is the ABC transporter domain. 34–41 (GPNGSGKT) serves as a coordination point for ATP.

The protein belongs to the ABC transporter superfamily. Heme (hemin) importer (TC 3.A.1.14.5) family. The complex is composed of two ATP-binding proteins (HmuV), two transmembrane proteins (HmuU) and a solute-binding protein (HmuT).

It localises to the cell inner membrane. Functionally, part of the ABC transporter complex HmuTUV involved in hemin import. Responsible for energy coupling to the transport system. This is Hemin import ATP-binding protein HmuV from Mesorhizobium japonicum (strain LMG 29417 / CECT 9101 / MAFF 303099) (Mesorhizobium loti (strain MAFF 303099)).